A 563-amino-acid polypeptide reads, in one-letter code: Inclusion membrane protein M (563 aa).

The Cytoplasmic portion of the chain corresponds to 1-36; that stretch reads MVYFRAHQPRHTPKTFPLEVHHSFSDKHPQIAKAMR. A helical transmembrane segment spans residues 37-57; it reads ITGIALAALSLLAVVACVIAV. A topological domain (vacuolar) is located at residue Ser58. Residues 59 to 79 form a helical membrane-spanning segment; sequence AGGAAIPLAVISGIAVMSGLL. Over 80 to 252 the chain is Cytoplasmic; sequence SAATIICSAK…VLKVALSLGV (173 aa). A helical transmembrane segment spans residues 253-273; that stretch reads LAGVAALIIFLPPSLPFIAVI. Residue Gly274 is a topological domain, vacuolar. The helical transmembrane segment at 275–295 threads the bilayer; the sequence is VSSLALGMASFLMIRGIKYLL. Over 296 to 563 the chain is Cytoplasmic; sequence EHSPLNRKQL…QLAQYLLDNH (268 aa).

The protein belongs to the chlamydial CPn_0065/CT_288/TC_0561 family. As to quaternary structure, interacts with host CCDC146. In host cells infected with C.trachomatis incM, CCDC146 is recruited to the periphery of the pathogen-containing vacuole but recruitment is not dependent on incM.

It is found in the host vacuole. It localises to the host pathogen-containing vacuole. The protein resides in the host pathogen-containing vacuole membrane. Its subcellular location is the host pathogen-containing vacuole lumen. The protein localises to the secreted. Functionally, interferes with host cell cytokinesis, centrosome positioning and Golgi distribution, and contributes to the morphology and stability of the pathogen-containing vacuole. May exert its effects by acting directly or indirectly on host microtubules. The sequence is that of Inclusion membrane protein M from Chlamydia trachomatis serovar D (strain ATCC VR-885 / DSM 19411 / UW-3/Cx).